The chain runs to 174 residues: Alkyl hydroperoxide reductase AhpD (174 aa).

The Proton donor role is filled by Cys-130. Cys-130 and Cys-133 are oxidised to a cystine. Cys-133 functions as the Cysteine sulfenic acid (-SOH) intermediate in the catalytic mechanism.

This sequence belongs to the AhpD family. In terms of assembly, homotrimer.

The catalysed reaction is N(6)-[(R)-dihydrolipoyl]-L-lysyl-[lipoyl-carrier protein] + a hydroperoxide = N(6)-[(R)-lipoyl]-L-lysyl-[lipoyl-carrier protein] + an alcohol + H2O. Antioxidant protein with alkyl hydroperoxidase activity. Required for the reduction of the AhpC active site cysteine residues and for the regeneration of the AhpC enzyme activity. In Corynebacterium kroppenstedtii (strain DSM 44385 / JCM 11950 / CIP 105744 / CCUG 35717), this protein is Alkyl hydroperoxide reductase AhpD.